A 297-amino-acid polypeptide reads, in one-letter code: Transcription factor PCF8 (297 aa).

Positions 1–22 (MEEVVGGGKERKRPRGALVGVG) are disordered. The TCP domain maps to 46 to 104 (GKDRHSKVVTSRGLRDRRVRLSVPTAIAFYDIQDRLGVDQPSKAIEWLIRAAAAAIDAL). Disordered regions lie at residues 116–136 (AASS…SETS) and 273–297 (AAPA…ERKT). The segment covering 282–297 (GERRLQLWDFKEERKT) has biased composition (basic and acidic residues).

Forms homodimers and heterodimers.

The protein localises to the nucleus. Transcription activator. Binds the promoter core sequence 5'-GGNCC-3'. This chain is Transcription factor PCF8 (PCF8), found in Oryza sativa subsp. indica (Rice).